We begin with the raw amino-acid sequence, 382 residues long: Galactokinase (382 aa).

34–37 provides a ligand contact to substrate; it reads EHTD. 124 to 130 lines the ATP pocket; the sequence is GAGLSSS. Residues S130 and E162 each contribute to the Mg(2+) site. Residue D174 is the Proton acceptor of the active site. Y223 contacts substrate.

The protein belongs to the GHMP kinase family. GalK subfamily.

It is found in the cytoplasm. The catalysed reaction is alpha-D-galactose + ATP = alpha-D-galactose 1-phosphate + ADP + H(+). It participates in carbohydrate metabolism; galactose metabolism. In terms of biological role, catalyzes the transfer of the gamma-phosphate of ATP to D-galactose to form alpha-D-galactose-1-phosphate (Gal-1-P). The protein is Galactokinase of Escherichia coli O157:H7 (strain EC4115 / EHEC).